The following is a 378-amino-acid chain: Anhydro-N-acetylmuramic acid kinase (378 aa).

23–30 (GTSMDGAD) lines the ATP pocket.

The protein belongs to the anhydro-N-acetylmuramic acid kinase family.

It carries out the reaction 1,6-anhydro-N-acetyl-beta-muramate + ATP + H2O = N-acetyl-D-muramate 6-phosphate + ADP + H(+). It participates in amino-sugar metabolism; 1,6-anhydro-N-acetylmuramate degradation. It functions in the pathway cell wall biogenesis; peptidoglycan recycling. Catalyzes the specific phosphorylation of 1,6-anhydro-N-acetylmuramic acid (anhMurNAc) with the simultaneous cleavage of the 1,6-anhydro ring, generating MurNAc-6-P. Is required for the utilization of anhMurNAc either imported from the medium or derived from its own cell wall murein, and thus plays a role in cell wall recycling. This Bordetella pertussis (strain Tohama I / ATCC BAA-589 / NCTC 13251) protein is Anhydro-N-acetylmuramic acid kinase.